The following is a 314-amino-acid chain: Methionyl-tRNA formyltransferase (314 aa).

112–115 (SLLP) contacts (6S)-5,6,7,8-tetrahydrofolate.

This sequence belongs to the Fmt family.

It carries out the reaction L-methionyl-tRNA(fMet) + (6R)-10-formyltetrahydrofolate = N-formyl-L-methionyl-tRNA(fMet) + (6S)-5,6,7,8-tetrahydrofolate + H(+). Attaches a formyl group to the free amino group of methionyl-tRNA(fMet). The formyl group appears to play a dual role in the initiator identity of N-formylmethionyl-tRNA by promoting its recognition by IF2 and preventing the misappropriation of this tRNA by the elongation apparatus. In Buchnera aphidicola subsp. Schizaphis graminum (strain Sg), this protein is Methionyl-tRNA formyltransferase.